A 327-amino-acid polypeptide reads, in one-letter code: Malate dehydrogenase (327 aa).

11-17 (GAAGQIS) lines the NAD(+) pocket. Substrate-binding residues include R92 and R98. Residues N105, Q112, and 129-131 (VGN) contribute to the NAD(+) site. Residues N131 and R162 each coordinate substrate. Catalysis depends on H187, which acts as the Proton acceptor.

Belongs to the LDH/MDH superfamily. MDH type 2 family.

It catalyses the reaction (S)-malate + NAD(+) = oxaloacetate + NADH + H(+). In terms of biological role, catalyzes the reversible oxidation of malate to oxaloacetate. This chain is Malate dehydrogenase, found in Nitrosomonas europaea (strain ATCC 19718 / CIP 103999 / KCTC 2705 / NBRC 14298).